A 334-amino-acid polypeptide reads, in one-letter code: N-acetyl-gamma-glutamyl-phosphate reductase (334 aa).

Cys-154 is an active-site residue.

Belongs to the NAGSA dehydrogenase family. Type 1 subfamily.

It is found in the cytoplasm. It catalyses the reaction N-acetyl-L-glutamate 5-semialdehyde + phosphate + NADP(+) = N-acetyl-L-glutamyl 5-phosphate + NADPH + H(+). It functions in the pathway amino-acid biosynthesis; L-arginine biosynthesis; N(2)-acetyl-L-ornithine from L-glutamate: step 3/4. Catalyzes the NADPH-dependent reduction of N-acetyl-5-glutamyl phosphate to yield N-acetyl-L-glutamate 5-semialdehyde. The polypeptide is N-acetyl-gamma-glutamyl-phosphate reductase (Shigella flexneri).